Here is a 462-residue protein sequence, read N- to C-terminus: Glycine--tRNA ligase (462 aa).

The substrate site is built by Arg-94 and Glu-143. Residues 175 to 177 (RNE), 185 to 190 (FRTCEF), 259 to 260 (EL), and 308 to 311 (GLTR) contribute to the ATP site. 190-194 (FEQME) is a substrate binding site. Residue 304 to 308 (ETSAG) participates in substrate binding.

This sequence belongs to the class-II aminoacyl-tRNA synthetase family. Homodimer.

The protein resides in the cytoplasm. The enzyme catalyses tRNA(Gly) + glycine + ATP = glycyl-tRNA(Gly) + AMP + diphosphate. In terms of biological role, catalyzes the attachment of glycine to tRNA(Gly). In Treponema pallidum (strain Nichols), this protein is Glycine--tRNA ligase.